Reading from the N-terminus, the 95-residue chain is RING finger protein Z (95 aa).

A compositionally biased stretch (low complexity) spans M1–S16. Residues M1 to V23 are disordered. G2 is lipidated: N-myristoyl glycine; by host. The RING-type; atypical zinc finger occupies C40–C76. A PTAP/PSAP motif motif is present at residues P90 to P93.

Belongs to the arenaviridae Z protein family. Interacts with protein NP; this interaction probably directs the encapsidated genome to budding sites. Interacts (via RING domain) with polymerase L; this interaction inhibits viral transcription and replication, Z partially blocks the product exit tunnel for the releasing nascent RNA product. Interacts with the glycoprotein complex; this interaction plays a role in virion budding. Interacts with host eIF4E; this interaction results in eIF4E reduced affinity for its substrate, the 5'-m7 G cap structure. Interacts (via late-budding domain) with host TSG101; this interaction is essential for budding and release of viral particles. Interacts with host RPLP0; this interaction may serve to load ribosome-like particles inside the virion. Interacts with host PML; this interaction induces PML bodies redistribution in the cytoplasm upon viral infection. Post-translationally, myristoylation is required for the role of RING finger protein Z in assembly and budding.

The protein localises to the virion. The protein resides in the host cytoplasm. Its subcellular location is the host perinuclear region. It localises to the host cell membrane. Functionally, plays a crucial role in virion assembly and budding. Expressed late in the virus life cycle, it acts as an inhibitor of viral transcription and RNA synthesis by interacting with the viral polymerase L. Presumably recruits the NP encapsidated genome to cellular membranes at budding sites via direct interaction with NP. Plays critical roles in the final steps of viral release by interacting with host TSG101, a member of the vacuolar protein-sorting pathway and using other cellular host proteins involved in vesicle formation pathway. The budding of the virus progeny occurs after association of protein Z with the viral glycoprotein complex SSP-GP1-GP2 at the cell periphery, step that requires myristoylation of protein Z. Also selectively represses protein production by associating with host eIF4E. In cell-based minigenome assay, has an inhibitory effect on the ribonucleoprotein machinery (vRNP), which is responsible for the replication and transcription of the viral genome. This Guanarito mammarenavirus (isolate Human/Venezuela/NH-95551/1990) (GTOV) protein is RING finger protein Z.